The primary structure comprises 994 residues: Chloride channel protein E (994 aa).

The segment at methionine 1–isoleucine 33 is disordered. At methionine 1–threonine 163 the chain is on the cytoplasmic side. Residues serine 11 to serine 32 show a composition bias toward low complexity. The next 11 membrane-spanning stretches (helical) occupy residues leucine 164–leucine 184, isoleucine 227–isoleucine 247, valine 271–glycine 291, phenylalanine 300–isoleucine 320, alanine 334–isoleucine 354, valine 362–leucine 382, leucine 410–isoleucine 430, isoleucine 449–leucine 469, leucine 505–proline 525, glycine 527–leucine 547, and glutamine 554–isoleucine 574. A CBS 1 domain is found at methionine 644 to glutamine 705. Disordered stretches follow at residues phenylalanine 715–asparagine 767, isoleucine 802–glutamate 822, and aspartate 846–isoleucine 872. Composition is skewed to low complexity over residues asparagine 717–asparagine 764 and serine 809–glutamate 822. Residues histidine 859–aspartate 870 show a composition bias toward acidic residues. The region spanning methionine 944–leucine 994 is the CBS 2 domain.

The protein belongs to the chloride channel (TC 2.A.49) family.

It localises to the membrane. Its function is as follows. Voltage-gated chloride channel. Chloride channels may have several functions including the regulation of cell volume, membrane potential stabilization and signal transduction. This is Chloride channel protein E (clcE) from Dictyostelium discoideum (Social amoeba).